A 336-amino-acid polypeptide reads, in one-letter code: Malate dehydrogenase, cytoplasmic (336 aa).

NAD(+) contacts are provided by residues 11-17 (GAAGQIG) and aspartate 42. Positions 92 and 98 each coordinate substrate. NAD(+) is bound by residues asparagine 105, glutamine 112, and 129-131 (VGN). Asparagine 131 and arginine 163 together coordinate substrate. The Proton acceptor role is filled by histidine 188.

Belongs to the LDH/MDH superfamily. MDH type 2 family. In terms of assembly, homodimer.

The protein resides in the cytoplasm. It catalyses the reaction (S)-malate + NAD(+) = oxaloacetate + NADH + H(+). Catalyzes the reversible conversion of (S)-malate to oxaloacetate in the cytoplasm where oxaloacetate is used for gluconeogenesis. This Caenorhabditis elegans protein is Malate dehydrogenase, cytoplasmic.